The following is a 316-amino-acid chain: uncharacterized protein (316 aa).

Topologically, residues serine 1–tyrosine 70 are cytoplasmic. The chain crosses the membrane as a helical span at residues isoleucine 71 to leucine 91. Residue histidine 92 is a topological domain, lumenal. The chain crosses the membrane as a helical span at residues phenylalanine 93–leucine 113. The Cytoplasmic segment spans residues asparagine 114–lysine 170. Residues tyrosine 171–leucine 191 form a helical membrane-spanning segment. Over tyrosine 192 to aspartate 194 the chain is Lumenal. Residues valine 195–valine 215 traverse the membrane as a helical segment. Topologically, residues tyrosine 216–asparagine 245 are cytoplasmic. A helical membrane pass occupies residues alanine 246–glycine 266. Residues asparagine 267–isoleucine 316 lie on the Lumenal side of the membrane.

It belongs to the UPF0742 family.

Its subcellular location is the endoplasmic reticulum. The protein resides in the membrane. This is an uncharacterized protein from Schizosaccharomyces pombe (strain 972 / ATCC 24843) (Fission yeast).